A 204-amino-acid chain; its full sequence is Putative AgrB-like protein (204 aa).

Helical transmembrane passes span 52–74 (YGIA…YLWL), 87–107 (LNCT…FQNI), 111–131 (NWIV…FAPA), 151–168 (AMIG…IPFA), and 173–190 (LIMV…PLTY).

Belongs to the AgrB family.

The protein resides in the cell membrane. Its function is as follows. May be involved in the proteolytic processing of a quorum sensing system signal molecule precursor. The polypeptide is Putative AgrB-like protein (Listeria monocytogenes serovar 1/2a (strain ATCC BAA-679 / EGD-e)).